Consider the following 483-residue polypeptide: Regulatory protein ViaA (483 aa).

Belongs to the ViaA family. Homodimer. Interacts with RavA.

The protein resides in the cytoplasm. Its function is as follows. Component of the RavA-ViaA chaperone complex, which may act on the membrane to optimize the function of some of the respiratory chains. ViaA stimulates the ATPase activity of RavA. This Escherichia coli O9:H4 (strain HS) protein is Regulatory protein ViaA.